Reading from the N-terminus, the 152-residue chain is Endoribonuclease YbeY (152 aa).

The Zn(2+) site is built by H101, H105, and H111. The interval 132-152 (PSSLIERTTKPAKKAAKRKKR) is disordered. Positions 141–152 (KPAKKAAKRKKR) are enriched in basic residues.

The protein belongs to the endoribonuclease YbeY family. The cofactor is Zn(2+).

It localises to the cytoplasm. Single strand-specific metallo-endoribonuclease involved in late-stage 70S ribosome quality control and in maturation of the 3' terminus of the 16S rRNA. The sequence is that of Endoribonuclease YbeY from Koribacter versatilis (strain Ellin345).